A 116-amino-acid polypeptide reads, in one-letter code: Putative pterin-4-alpha-carbinolamine dehydratase (116 aa).

This sequence belongs to the pterin-4-alpha-carbinolamine dehydratase family.

It carries out the reaction (4aS,6R)-4a-hydroxy-L-erythro-5,6,7,8-tetrahydrobiopterin = (6R)-L-erythro-6,7-dihydrobiopterin + H2O. In Stenotrophomonas maltophilia (strain R551-3), this protein is Putative pterin-4-alpha-carbinolamine dehydratase.